The sequence spans 394 residues: MAKEKFERSKPHVNVGTIGHVDHGKTTLTAAISHVLTKTYGGEAKDFAQIDNAPEERERGITINTSHIEYDTPTRHYAHVDCPGHADYVKNMITGAAQMDGAILVVASTDGPMPQTREHILLSRQVGVPFIIVFMNKCDMVDDEELLELVEMEVRELLSEYDFPGDDLPVIQGSALKALEGEPEWEAKILELAEALDSYIPEPERAIDGAFILPIEDVFSISGRGTVVTGRVERGIVKVGDEVEIVGIKETTKTTCTGVEMFRKLLDEGRAGENCGVLLRGTKRDEVERGQVLAQPGSITPHTQFESEVYVLSKEEGGRHTPFFKGYRPQFYFRTTDVTGTIELPEGVEMVMPGDNIKMVVTLICPIAMDEGLRFAIREGGRTVGAGVVAKIIA.

The 195-residue stretch at 10–204 (KPHVNVGTIG…ALDSYIPEPE (195 aa)) folds into the tr-type G domain. The G1 stretch occupies residues 19–26 (GHVDHGKT). 19–26 (GHVDHGKT) lines the GTP pocket. T26 is a binding site for Mg(2+). A G2 region spans residues 60–64 (GITIN). The tract at residues 81 to 84 (DCPG) is G3. GTP contacts are provided by residues 81–85 (DCPGH) and 136–139 (NKCD). Residues 136–139 (NKCD) form a G4 region. The G5 stretch occupies residues 174-176 (SAL).

It belongs to the TRAFAC class translation factor GTPase superfamily. Classic translation factor GTPase family. EF-Tu/EF-1A subfamily. Monomer.

Its subcellular location is the cytoplasm. The enzyme catalyses GTP + H2O = GDP + phosphate + H(+). Functionally, GTP hydrolase that promotes the GTP-dependent binding of aminoacyl-tRNA to the A-site of ribosomes during protein biosynthesis. This chain is Elongation factor Tu 2, found in Shewanella loihica (strain ATCC BAA-1088 / PV-4).